Consider the following 333-residue polypeptide: Late embryogenesis abundant protein 1 (333 aa).

2 disordered regions span residues 1–20 and 116–246; these read MASR…RRAA and KDYT…GQGQ. Residues 3 to 52 are a coiled coil; sequence SRQDRREARAEADARRAAEEIARARDERVMQAEVDARSAADEIARARADR. Basic and acidic residues-rich tracts occupy residues 116–163, 172–219, and 227–241; these read KDYT…KDAV, EATK…DATK, and DKAR…DATD.

It belongs to the LEA type 4 family.

This Oryza sativa subsp. indica (Rice) protein is Late embryogenesis abundant protein 1 (LEA1).